We begin with the raw amino-acid sequence, 79 residues long: Large ribosomal subunit protein uL24 (79 aa).

This sequence belongs to the universal ribosomal protein uL24 family. Part of the 50S ribosomal subunit.

Functionally, one of two assembly initiator proteins, it binds directly to the 5'-end of the 23S rRNA, where it nucleates assembly of the 50S subunit. One of the proteins that surrounds the polypeptide exit tunnel on the outside of the subunit. The polypeptide is Large ribosomal subunit protein uL24 (Lactobacillus delbrueckii subsp. bulgaricus (strain ATCC BAA-365 / Lb-18)).